The following is a 277-amino-acid chain: Shikimate dehydrogenase (NADP(+)) (277 aa).

Residues S17–S19 and T64 contribute to the shikimate site. K68 (proton acceptor) is an active-site residue. Shikimate is bound by residues N88 and D103. NADP(+)-binding positions include G128–S132 and L217. Residue Y219 participates in shikimate binding. G240 is a binding site for NADP(+).

This sequence belongs to the shikimate dehydrogenase family. In terms of assembly, homodimer.

The enzyme catalyses shikimate + NADP(+) = 3-dehydroshikimate + NADPH + H(+). It participates in metabolic intermediate biosynthesis; chorismate biosynthesis; chorismate from D-erythrose 4-phosphate and phosphoenolpyruvate: step 4/7. Functionally, involved in the biosynthesis of the chorismate, which leads to the biosynthesis of aromatic amino acids. Catalyzes the reversible NADPH linked reduction of 3-dehydroshikimate (DHSA) to yield shikimate (SA). The chain is Shikimate dehydrogenase (NADP(+)) from Afipia carboxidovorans (strain ATCC 49405 / DSM 1227 / KCTC 32145 / OM5) (Oligotropha carboxidovorans).